A 247-amino-acid chain; its full sequence is Adenosylcobinamide-GDP ribazoletransferase (247 aa).

4 helical membrane-spanning segments follow: residues 34–54, 59–79, 113–133, and 194–214; these read IITFPLIGLLLGAISGLVFMV, CGVPLAALFSVLVLALMTGGF, GGLALIFVVLAKILVLSELAL, and VLLPGMHGVAAMVVTMVAIFI.

Belongs to the CobS family. Requires Mg(2+) as cofactor.

It is found in the cell inner membrane. The enzyme catalyses alpha-ribazole + adenosylcob(III)inamide-GDP = adenosylcob(III)alamin + GMP + H(+). It catalyses the reaction alpha-ribazole 5'-phosphate + adenosylcob(III)inamide-GDP = adenosylcob(III)alamin 5'-phosphate + GMP + H(+). The protein operates within cofactor biosynthesis; adenosylcobalamin biosynthesis; adenosylcobalamin from cob(II)yrinate a,c-diamide: step 7/7. Functionally, joins adenosylcobinamide-GDP and alpha-ribazole to generate adenosylcobalamin (Ado-cobalamin). Also synthesizes adenosylcobalamin 5'-phosphate from adenosylcobinamide-GDP and alpha-ribazole 5'-phosphate. This chain is Adenosylcobinamide-GDP ribazoletransferase, found in Escherichia coli (strain ATCC 8739 / DSM 1576 / NBRC 3972 / NCIMB 8545 / WDCM 00012 / Crooks).